The following is a 440-amino-acid chain: Protein translocase subunit SecY (440 aa).

Helical transmembrane passes span 17 to 37 (IFFTIAMIVLYRIGAQIPSPG), 74 to 94 (IFAIGIMPYITASIIVQLLTV), 116 to 135 (YTRYLTVALALLQSSGIVAL), 155 to 175 (FFDLIVLVITMTAGAVLVMWM), 178 to 198 (LITEKGVGNGMSLLIFAGIAT), 213 to 233 (GVVFAVVLASVLILVIGVVFV), 270 to 290 (VIPVIFASSLIYMPVLITQIV), 316 to 336 (WQYIVLYFALTIFFSYFYVSV), 374 to 394 (LLFVGSLYLAVIAVLPNIMLD), and 403 to 423 (GATPFGGTAILILVSVALTTV).

Belongs to the SecY/SEC61-alpha family. As to quaternary structure, component of the Sec protein translocase complex. Heterotrimer consisting of SecY, SecE and SecG subunits. The heterotrimers can form oligomers, although 1 heterotrimer is thought to be able to translocate proteins. Interacts with the ribosome. Interacts with SecDF, and other proteins may be involved. Interacts with SecA.

It localises to the cell membrane. The central subunit of the protein translocation channel SecYEG. Consists of two halves formed by TMs 1-5 and 6-10. These two domains form a lateral gate at the front which open onto the bilayer between TMs 2 and 7, and are clamped together by SecE at the back. The channel is closed by both a pore ring composed of hydrophobic SecY resides and a short helix (helix 2A) on the extracellular side of the membrane which forms a plug. The plug probably moves laterally to allow the channel to open. The ring and the pore may move independently. This chain is Protein translocase subunit SecY, found in Corynebacterium glutamicum (strain ATCC 13032 / DSM 20300 / JCM 1318 / BCRC 11384 / CCUG 27702 / LMG 3730 / NBRC 12168 / NCIMB 10025 / NRRL B-2784 / 534).